Reading from the N-terminus, the 177-residue chain is ATP-dependent protease subunit HslV (177 aa).

The active site involves Thr2. The Na(+) site is built by Gly158, Cys161, and Thr164.

Belongs to the peptidase T1B family. HslV subfamily. In terms of assembly, a double ring-shaped homohexamer of HslV is capped on each side by a ring-shaped HslU homohexamer. The assembly of the HslU/HslV complex is dependent on binding of ATP.

It localises to the cytoplasm. The catalysed reaction is ATP-dependent cleavage of peptide bonds with broad specificity.. Allosterically activated by HslU binding. Functionally, protease subunit of a proteasome-like degradation complex believed to be a general protein degrading machinery. The protein is ATP-dependent protease subunit HslV of Pseudomonas aeruginosa (strain LESB58).